We begin with the raw amino-acid sequence, 506 residues long: Serine/threonine-protein kinase RIO1 (506 aa).

The disordered stretch occupies residues 22 to 52 (TASSSSDDEPEQAVVKQEKLEAGEQIEEQYD). A Protein kinase domain is found at 142–506 (LNIDGCISTG…KKRAHRQHMK (365 aa)). ATP contacts are provided by residues 148 to 156 (ISTGKEANV), Lys169, and Leu241. Asp285 acts as the Proton acceptor in catalysis. Asn290 lines the ATP pocket. Mg(2+)-binding residues include Asn290 and Asp302. Asp302 serves as the catalytic 4-aspartylphosphate intermediate. The disordered stretch occupies residues 418–506 (GDGFGEEHDD…KKRAHRQHMK (89 aa)). Residues 424 to 435 (EHDDSDDNDDEE) are compositionally biased toward acidic residues. Positions 454-490 (EKERKIAMHTRNREETAEERKERKAAVKEEKREQRKE) are enriched in basic and acidic residues. The span at 491–506 (KIPKHLKKRAHRQHMK) shows a compositional bias: basic residues.

It belongs to the protein kinase superfamily. RIO-type Ser/Thr kinase family. Mg(2+) serves as cofactor. Expressed in vulva and uterine cells, uterine seam cells (utse), spermatheca and in the nervous system including chemosensory neurons in the head, nerve ring neurons (RID/RIF), inhibitory motor neurons (DA/DD/VA/VD), mechanosensory neurons (ALML/PLML) and tail sensory neurons (DVA//PDA). Also expressed in intestine and pharynx (procorpus) and rectal valve and gland.

It is found in the cytoplasm. It catalyses the reaction L-seryl-[protein] + ATP = O-phospho-L-seryl-[protein] + ADP + H(+). The catalysed reaction is L-threonyl-[protein] + ATP = O-phospho-L-threonyl-[protein] + ADP + H(+). Its function is as follows. Involved in the final steps of cytoplasmic maturation of the 40S ribosomal subunit. Despite the protein kinase domain is proposed to act predominantly as an ATPase. The catalytic activity regulates its dynamic association with the 40S subunit. Plays a role in oogenesis by regulating germ cell proliferation, progression through diplotene and diakinesis stages and oocyte maturation. Regulates germline development probably by regulating the phosphorylation of mpk-1. Involved in larval development. The sequence is that of Serine/threonine-protein kinase RIO1 from Caenorhabditis elegans.